The following is a 193-amino-acid chain: Ferredoxin-2, mitochondrial (193 aa).

Residues 38–70 are disordered; sequence QATPEKLETSNEEEGSSSAQITAGVESDAENQR. The 2Fe-2S ferredoxin-type domain maps to 78–180; that stretch reads VEVVFLDRSG…GAEFTLPKIT (103 aa). Cys115, Cys121, Cys124, and Cys161 together coordinate [2Fe-2S] cluster.

This sequence belongs to the adrenodoxin/putidaredoxin family. As to quaternary structure, component of the mitochondrial core iron-sulfur cluster (ISC) complex composed of NFS1, LYRM4, NDUFAB1, ISCU, FXN, and FDX2; this complex is a heterohexamer containing two copies of each monomer. The cofactor is [2Fe-2S] cluster.

It localises to the mitochondrion. Its subcellular location is the mitochondrion matrix. Its function is as follows. Electron donor, of the core iron-sulfur cluster (ISC) assembly complex, that acts to reduce the persulfide into sulfide during [2Fe-2S] clusters assembly on the scaffolding protein ISCU. The core iron-sulfur cluster (ISC) assembly complex is involved in the de novo synthesis of a [2Fe-2S] cluster, the first step of the mitochondrial iron-sulfur protein biogenesis. This process is initiated by the cysteine desulfurase complex (NFS1:LYRM4:NDUFAB1) that produces persulfide which is delivered on the scaffold protein ISCU in a FXN-dependent manner. Then this complex is stabilized by FDX2 which provides reducing equivalents to accomplish the [2Fe-2S] cluster assembly. Finally, the [2Fe-2S] cluster is transferred from ISCU to chaperone proteins, including HSCB, HSPA9 and GLRX5. Essential for coenzyme Q biosynthesis: together with FDXR, transfers the electrons required for the hydroxylation reaction performed by COQ6. This Xenopus laevis (African clawed frog) protein is Ferredoxin-2, mitochondrial.